Here is a 76-residue protein sequence, read N- to C-terminus: Small ribosomal subunit protein bS18 (76 aa).

This sequence belongs to the bacterial ribosomal protein bS18 family. In terms of assembly, part of the 30S ribosomal subunit. Forms a tight heterodimer with protein bS6.

Binds as a heterodimer with protein bS6 to the central domain of the 16S rRNA, where it helps stabilize the platform of the 30S subunit. This chain is Small ribosomal subunit protein bS18, found in Stutzerimonas stutzeri (strain A1501) (Pseudomonas stutzeri).